The sequence spans 333 residues: Cinnamoyl-CoA reductase 1 (333 aa).

NADP(+) contacts are provided by residues 13–19 (GAGGFIA), Arg-38, Lys-44, 64–65 (DL), 84–86 (TAS), Tyr-157, Lys-161, 184–187 (PVLV), and Ser-199. A disulfide bond links Cys-150 and Cys-158. Lys-161 functions as the Proton donor in the catalytic mechanism.

This sequence belongs to the NAD(P)-dependent epimerase/dehydratase family. Dihydroflavonol-4-reductase subfamily. Post-translationally, the formation of a reversible disulfide bond reduces activity by perturbing the positioning of nearby catalytic residues. Expressed in flowers, leaves and stems.

The protein localises to the cytoplasm. It catalyses the reaction (E)-coniferaldehyde + NADP(+) + CoA = (E)-feruloyl-CoA + NADPH + H(+). The catalysed reaction is (E)-4-coumaraldehyde + NADP(+) + CoA = (E)-4-coumaroyl-CoA + NADPH + H(+). It carries out the reaction (E)-sinapaldehyde + NADP(+) + CoA = (E)-sinapoyl-CoA + NADPH + H(+). The enzyme catalyses (E)-cinnamaldehyde + NADP(+) + CoA = (E)-cinnamoyl-CoA + NADPH + H(+). It participates in aromatic compound metabolism; phenylpropanoid biosynthesis. With respect to regulation, inhibited by sodium iodide-mediated oxidation. In terms of biological role, involved in the latter stages of lignin biosynthesis. Catalyzes one of the last steps of monolignol biosynthesis, the conversion of cinnamoyl-CoAs into their corresponding cinnamaldehydes. Mediates the conversion of feruloyl CoA to coniferylaldehyde. Also active toward p-coumaroyl-CoA and sinapoyl-CoA. Involved in the production of floral volatile phenylpropanoids in flowers of fragrant cultivars (e.g. cv. Mitchell and cv. V26) from cinnamic acid, a common precursor with the anthocyanin biosynthesis pathway involved in flower pigmentation. This Petunia hybrida (Petunia) protein is Cinnamoyl-CoA reductase 1.